A 155-amino-acid chain; its full sequence is Ribosome maturation factor RimP (155 aa).

This sequence belongs to the RimP family.

The protein resides in the cytoplasm. Functionally, required for maturation of 30S ribosomal subunits. In Synechococcus sp. (strain CC9902), this protein is Ribosome maturation factor RimP.